Here is a 342-residue protein sequence, read N- to C-terminus: Tetraacyldisaccharide 4'-kinase (342 aa).

68–75 (TVGGTGKT) provides a ligand contact to ATP.

It belongs to the LpxK family.

It carries out the reaction a lipid A disaccharide + ATP = a lipid IVA + ADP + H(+). The protein operates within glycolipid biosynthesis; lipid IV(A) biosynthesis; lipid IV(A) from (3R)-3-hydroxytetradecanoyl-[acyl-carrier-protein] and UDP-N-acetyl-alpha-D-glucosamine: step 6/6. In terms of biological role, transfers the gamma-phosphate of ATP to the 4'-position of a tetraacyldisaccharide 1-phosphate intermediate (termed DS-1-P) to form tetraacyldisaccharide 1,4'-bis-phosphate (lipid IVA). The chain is Tetraacyldisaccharide 4'-kinase from Burkholderia pseudomallei (strain K96243).